Consider the following 1501-residue polypeptide: EF-hand calcium-binding domain-containing protein 6 (1501 aa).

Positions 18-47 (RKFTHSRPHSSPCRVYSRNGSPNKFRSSST) are disordered. The span at 35–47 (RNGSPNKFRSSST) shows a compositional bias: polar residues. EF-hand domains are found at residues 70-105 (DRGDELQKAFQLLDTGQNLTVSKSELRRIITDFLMP), 172-207 (KNIKTVMKAFELIDVNKTGLVRPQELRRVLETFCMK), 297-332 (KSYEKVEKALSAGDPCKGGYVSFNYLKIVLDTFVYQ), 403-438 (DHSASLKKALLIINTKPDGPITREEFRYILNCMAVK), 439-474 (LSDSEFKELMQMLDPGDTGVVNTSMFIDLIEENCRM), 504-539 (RNLQAFYNMLRSYDLGDTGRIGRNNFKKIMHVFCPF), and 634-669 (QQDPAFKKRFLDFSKEPNGKINVHDFKKVLEDTGMP). A disordered region spans residues 699–718 (EDPPMRGPETTPPQPPTPSK). EF-hand domains lie at 741–776 (ESFRDPYSAFFKTDADRDGIINMHDLHRLLLHLLLN), 847–882 (NRWSDLSKNFLETDNEGNGILRRRDIKNALYGFDIP), 883–918 (LTPREFEKLWARYDTEGKGHITYQEFLQKLGINYSP), 964–999 (DRHQDISKAFTKTDQSKTNYISICKMQEVLEECGCS), 1069–1104 (SSQLALSTAFSALDKEDTGFVKATEFGQVLKDFCYK), 1176–1211 (SHYHAITQEFENFDTMKTNTISREEFRAICNRRVQI), and 1212–1247 (LTDEQFDRLWNEMPVNAKGRLKYPDFLSRFSSETAA). Positions 754, 756, 758, and 765 each coordinate Ca(2+). At Thr-884 the chain carries Phosphothreonine. Residues 1246–1307 (AATPMATGDS…TTVIPGTPPL (62 aa)) form a disordered region. 2 stretches are compositionally biased toward polar residues: residues 1270–1279 (GTRSALSLPT) and 1286–1301 (SKSQSHPCTPASTTVI). Position 1290 is a phosphoserine (Ser-1290). Phosphothreonine is present on residues Thr-1294 and Thr-1304. The interval 1303-1501 (GTPPLQNCDP…YNDFLRAFLQ (199 aa)) is interaction with PARK7. 3 consecutive EF-hand domains span residues 1359-1394 (ISKEECQQLIIKYDLKSNGKFAYCDFIQSCVLLLKA), 1434-1469 (HCWRPMRRTFKSYDEAGTGLLSVADFRTVLRQYSIN), and 1470-1501 (LSEEEFFHILEYYDKTLSSKISYNDFLRAFLQ). Residues 1407-1501 (NAHKMKEAGA…YNDFLRAFLQ (95 aa)) are interaction with AR.

As to quaternary structure, microtubule inner protein component of sperm flagellar doublet microtubules. Binds PARK7. Part of a ternary complex containing PARK7, EFCAB6/DJBP and AR. As to expression, specifically expressed in the testis.

It is found in the nucleus. It localises to the cytoplasm. The protein resides in the cytoskeleton. Its subcellular location is the flagellum axoneme. Its function is as follows. Negatively regulates the androgen receptor by recruiting histone deacetylase complex, and protein DJ-1 antagonizes this inhibition by abrogation of this complex. Microtubule inner protein (MIP) part of the dynein-decorated doublet microtubules (DMTs) in cilia axoneme, which is required for motile cilia beating. In Homo sapiens (Human), this protein is EF-hand calcium-binding domain-containing protein 6.